A 411-amino-acid chain; its full sequence is Pyridinium-3,5-bisthiocarboxylic acid mononucleotide nickel insertion protein (411 aa).

This sequence belongs to the LarC family.

It carries out the reaction Ni(II)-pyridinium-3,5-bisthiocarboxylate mononucleotide = pyridinium-3,5-bisthiocarboxylate mononucleotide + Ni(2+). Its function is as follows. Involved in the biosynthesis of a nickel-pincer cofactor ((SCS)Ni(II) pincer complex). Binds Ni(2+), and functions in nickel delivery to pyridinium-3,5-bisthiocarboxylic acid mononucleotide (P2TMN), to form the mature cofactor. Is thus probably required for the activation of nickel-pincer cofactor-dependent enzymes. In Geobacillus kaustophilus (strain HTA426), this protein is Pyridinium-3,5-bisthiocarboxylic acid mononucleotide nickel insertion protein.